The sequence spans 1115 residues: Phytochrome E (1115 aa).

The 171-residue stretch at 213–383 (DIGTLCDTVV…AFSLQLYMEL (171 aa)) folds into the GAF domain. Position 318 (Cys318) interacts with phytochromobilin. The 72-residue stretch at 598–669 (MALELVRLVE…ALMCRALQGE (72 aa)) folds into the PAS 1 domain. Residues 672 to 728 (RNVEVKLLKFGNHPTKEVVYLVVNACTSRDYKNDIIGVCFVGQDITPEKAVMDKFVR) form the PAC domain. Residues 732–803 (DYEAIIQSLN…DALTKFMILL (72 aa)) form the PAS 2 domain. A Histidine kinase domain is found at 880-1100 (YIQQQMKNPL…YFLIDLDFKT (221 aa)).

It belongs to the phytochrome family. As to quaternary structure, homodimer. In terms of processing, contains one covalently linked phytochromobilin chromophore.

In terms of biological role, regulatory photoreceptor which exists in two forms that are reversibly interconvertible by light: the Pr form that absorbs maximally in the red region of the spectrum and the Pfr form that absorbs maximally in the far-red region. Photoconversion of Pr to Pfr induces an array of morphogenic responses, whereas reconversion of Pfr to Pr cancels the induction of those responses. Pfr controls the expression of a number of nuclear genes including those encoding the small subunit of ribulose-bisphosphate carboxylase, chlorophyll A/B binding protein, protochlorophyllide reductase, rRNA, etc. It also controls the expression of its own gene(s) in a negative feedback fashion. This Ipomoea nil (Japanese morning glory) protein is Phytochrome E (PHYE).